The chain runs to 719 residues: Protein STRUBBELIG-RECEPTOR FAMILY 6 (719 aa).

An N-terminal signal peptide occupies residues 1 to 29 (MRENWAVVALFTLCIVGFELRFIHGATDA). At 30 to 293 (SDTSALNTLF…SKKSGIGAGA (264 aa)) the chain is on the extracellular side. 6 LRR repeats span residues 97-118 (SLTELDLSSNNLGGDLPYQFPP), 119-140 (NLQRLNLANNQFTGAASYSLSQ), 143-164 (PLKYLNLGHNQFKGQIAIDFSK), 167-190 (SLTTLDFSFNSFTNSLPATFSSLT), 191-213 (SLKSLYLQNNQFSGTVDVLAGLP), and 214-234 (LETLNIANNDFTGWIPSSLKG). The segment at 242-287 (NSFNTGPAPPPPPGTPPIRGSPSRKSGGRESRSSDESTRNGDSKKS) is disordered. The span at 248 to 257 (PAPPPPPGTP) shows a compositional bias: pro residues. The segment covering 268–286 (GGRESRSSDESTRNGDSKK) has biased composition (basic and acidic residues). The helical transmembrane segment at 294-314 (IAGIIISLLVVTALLVAFFLF) threads the bilayer. At 315–719 (RRKKSKRSSP…GSADTTSDYM (405 aa)) the chain is on the cytoplasmic side. 2 disordered regions span residues 322-355 (SSPMDIEKTDNQPFTLASNDFHENNSIQSSSSVE) and 364-383 (SINLRPPPIDRNKSFDDEDS). Residues 332-354 (NQPFTLASNDFHENNSIQSSSSV) are compositionally biased toward polar residues. Residue Ser-377 is modified to Phosphoserine. One can recognise a Protein kinase domain in the interval 416–690 (FSVDNLLGEG…SEVVQALVVL (275 aa)). Residues 422–430 (LGEGTFGRV) and Lys-444 contribute to the ATP site. The interval 700 to 719 (TVGVDPSQRAGSADTTSDYM) is disordered. A compositionally biased stretch (polar residues) spans 708 to 719 (RAGSADTTSDYM).

This sequence belongs to the protein kinase superfamily. Ser/Thr protein kinase family. In terms of tissue distribution, expressed in seedlings, roots, stems, leaves, flowers and siliques.

The protein resides in the membrane. The protein is Protein STRUBBELIG-RECEPTOR FAMILY 6 (SRF6) of Arabidopsis thaliana (Mouse-ear cress).